We begin with the raw amino-acid sequence, 213 residues long: dITP/XTP pyrophosphatase (213 aa).

17–22 (SNNAGK) contacts substrate. D78 functions as the Proton acceptor in the catalytic mechanism. Residue D78 coordinates Mg(2+). Substrate is bound by residues S79, 164-167 (FGYD), K187, and 192-193 (HR).

Belongs to the HAM1 NTPase family. As to quaternary structure, homodimer. It depends on Mg(2+) as a cofactor.

It catalyses the reaction XTP + H2O = XMP + diphosphate + H(+). The enzyme catalyses dITP + H2O = dIMP + diphosphate + H(+). The catalysed reaction is ITP + H2O = IMP + diphosphate + H(+). Its function is as follows. Pyrophosphatase that catalyzes the hydrolysis of nucleoside triphosphates to their monophosphate derivatives, with a high preference for the non-canonical purine nucleotides XTP (xanthosine triphosphate), dITP (deoxyinosine triphosphate) and ITP. Seems to function as a house-cleaning enzyme that removes non-canonical purine nucleotides from the nucleotide pool, thus preventing their incorporation into DNA/RNA and avoiding chromosomal lesions. In Bordetella parapertussis (strain 12822 / ATCC BAA-587 / NCTC 13253), this protein is dITP/XTP pyrophosphatase.